A 166-amino-acid chain; its full sequence is PTS system glucose-specific EIIA component (166 aa).

One can recognise a PTS EIIA type-1 domain in the interval 34–138 (DPVFAQKMMG…SVISPIIITN (105 aa)). Zn(2+)-binding residues include His-71 and His-86. Catalysis depends on His-86, which acts as the Tele-phosphohistidine intermediate; for EIIA activity. His-86 bears the Phosphohistidine; by HPr mark.

Heterodimer with glycerol kinase (glpk). It depends on Zn(2+) as a cofactor.

The protein resides in the cytoplasm. Its function is as follows. The phosphoenolpyruvate-dependent sugar phosphotransferase system (sugar PTS), a major carbohydrate active transport system, catalyzes the phosphorylation of incoming sugar substrates concomitantly with their translocation across the cell membrane. The enzyme II complex composed of PtsG and Crr is involved in glucose transport. The sequence is that of PTS system glucose-specific EIIA component (crr) from Staphylococcus aureus (strain MRSA252).